The sequence spans 184 residues: Ribosome maturation factor RimP (184 aa).

The protein belongs to the RimP family.

It is found in the cytoplasm. Functionally, required for maturation of 30S ribosomal subunits. The polypeptide is Ribosome maturation factor RimP (Zymomonas mobilis subsp. mobilis (strain ATCC 31821 / ZM4 / CP4)).